A 164-amino-acid polypeptide reads, in one-letter code: Protein SprT (164 aa).

The SprT-like domain maps to 14-156 (QLAESFFKRP…LCRRCRQTLV (143 aa)). A Zn(2+)-binding site is contributed by H69. Residue E70 is part of the active site. Position 73 (H73) interacts with Zn(2+).

This sequence belongs to the SprT family. The cofactor is Zn(2+).

The protein localises to the cytoplasm. This is Protein SprT from Pseudomonas fluorescens (strain ATCC BAA-477 / NRRL B-23932 / Pf-5).